Consider the following 455-residue polypeptide: Membrane protein Pbs54 (455 aa).

A helical membrane pass occupies residues 12 to 32 (IISIIILILRISLFSCAEHLF). Residues Asn-41, Asn-102, and Asn-125 are each glycosylated (N-linked (GlcNAc...) asparagine). 6 helical membrane passes run 181 to 201 (IFLI…LFNG), 220 to 240 (FIFF…LSCI), 244 to 264 (ILTF…FYLF), 285 to 305 (ILIG…IIFI), 312 to 332 (FLVK…IFFL), and 346 to 366 (FVFS…FWNI). N-linked (GlcNAc...) asparagine glycosylation is present at Asn-373. Residues 398 to 418 (NMFALFMIFAMSILSIIFPRI) traverse the membrane as a helical segment.

The protein localises to the cell projection. It is found in the cilium. It localises to the flagellum. Its subcellular location is the cell membrane. Its function is as follows. Plays a role in gamete fertilization. Required for the successful transmission of parasites to mosquito. In Plasmodium berghei (strain Anka), this protein is Membrane protein Pbs54.